Reading from the N-terminus, the 396-residue chain is S-adenosylmethionine synthase (396 aa).

Histidine 14 is an ATP binding site. A Mg(2+)-binding site is contributed by aspartate 16. Glutamate 42 is a binding site for K(+). L-methionine is bound by residues glutamate 55 and glutamine 98. The tract at residues 98–108 is flexible loop; sequence QSPDIAMGVDK. ATP is bound by residues 174-176, 240-241, aspartate 249, 255-256, alanine 272, and lysine 276; these read DGK, RF, and RK. Residue aspartate 249 participates in L-methionine binding. Lysine 280 lines the L-methionine pocket.

This sequence belongs to the AdoMet synthase family. Homotetramer; dimer of dimers. The cofactor is Mg(2+). K(+) serves as cofactor.

The protein resides in the cytoplasm. The catalysed reaction is L-methionine + ATP + H2O = S-adenosyl-L-methionine + phosphate + diphosphate. It participates in amino-acid biosynthesis; S-adenosyl-L-methionine biosynthesis; S-adenosyl-L-methionine from L-methionine: step 1/1. Catalyzes the formation of S-adenosylmethionine (AdoMet) from methionine and ATP. The overall synthetic reaction is composed of two sequential steps, AdoMet formation and the subsequent tripolyphosphate hydrolysis which occurs prior to release of AdoMet from the enzyme. This is S-adenosylmethionine synthase from Caldicellulosiruptor saccharolyticus (strain ATCC 43494 / DSM 8903 / Tp8T 6331).